Reading from the N-terminus, the 374-residue chain is tRNA-specific 2-thiouridylase MnmA (374 aa).

Residues 13-20 (GMSGGVDS) and Met39 contribute to the ATP site. Residues 99–101 (NPD) are interaction with target base in tRNA. Cys104 serves as the catalytic Nucleophile. Cys104 and Cys201 are joined by a disulfide. Gly128 contacts ATP. The tract at residues 151–153 (KDQ) is interaction with tRNA. Cys201 functions as the Cysteine persulfide intermediate in the catalytic mechanism. Positions 313 to 314 (RY) are interaction with tRNA.

The protein belongs to the MnmA/TRMU family.

Its subcellular location is the cytoplasm. The enzyme catalyses S-sulfanyl-L-cysteinyl-[protein] + uridine(34) in tRNA + AH2 + ATP = 2-thiouridine(34) in tRNA + L-cysteinyl-[protein] + A + AMP + diphosphate + H(+). Functionally, catalyzes the 2-thiolation of uridine at the wobble position (U34) of tRNA, leading to the formation of s(2)U34. The sequence is that of tRNA-specific 2-thiouridylase MnmA from Streptococcus equi subsp. zooepidemicus (strain MGCS10565).